A 178-amino-acid chain; its full sequence is RNA pyrophosphohydrolase (178 aa).

Positions 18-171 (PYRPCVGLMV…KRKVYEQVVA (154 aa)) constitute a Nudix hydrolase domain. A Nudix box motif is present at residues 59 to 80 (GGIDKGEDPAQAALRELYEETG).

Belongs to the Nudix hydrolase family. RppH subfamily. Requires a divalent metal cation as cofactor.

Its function is as follows. Accelerates the degradation of transcripts by removing pyrophosphate from the 5'-end of triphosphorylated RNA, leading to a more labile monophosphorylated state that can stimulate subsequent ribonuclease cleavage. This Brucella abortus (strain 2308) protein is RNA pyrophosphohydrolase.